A 278-amino-acid polypeptide reads, in one-letter code: Indole-3-glycerol phosphate synthase (278 aa).

Belongs to the TrpC family.

It catalyses the reaction 1-(2-carboxyphenylamino)-1-deoxy-D-ribulose 5-phosphate + H(+) = (1S,2R)-1-C-(indol-3-yl)glycerol 3-phosphate + CO2 + H2O. It participates in amino-acid biosynthesis; L-tryptophan biosynthesis; L-tryptophan from chorismate: step 4/5. This is Indole-3-glycerol phosphate synthase from Pseudomonas aeruginosa (strain UCBPP-PA14).